A 483-amino-acid chain; its full sequence is 6-phosphogluconate dehydrogenase, decarboxylating (483 aa).

Residues 10–15 (GLAVMG) and 33–35 (NRT) each bind NADP(+). Lysine 38 bears the N6-acetyllysine mark. Residue serine 57 is modified to Phosphoserine. NADP(+) is bound by residues 75-77 (VKA) and asparagine 103. Positions 103, 129, and 131 each coordinate substrate. Serine 129 carries the post-translational modification Phosphoserine. The active-site Proton acceptor is the lysine 184. A substrate-binding site is contributed by 187–188 (HN). Catalysis depends on glutamate 191, which acts as the Proton donor. Residues tyrosine 192, lysine 261, arginine 288, arginine 447, and histidine 453 each contribute to the substrate site. Residue 478 to 481 (SSSY) coordinates NADP(+).

The protein belongs to the 6-phosphogluconate dehydrogenase family. As to quaternary structure, homodimer.

It localises to the cytoplasm. The catalysed reaction is 6-phospho-D-gluconate + NADP(+) = D-ribulose 5-phosphate + CO2 + NADPH. Its pathway is carbohydrate degradation; pentose phosphate pathway; D-ribulose 5-phosphate from D-glucose 6-phosphate (oxidative stage): step 3/3. Catalyzes the oxidative decarboxylation of 6-phosphogluconate to ribulose 5-phosphate and CO(2), with concomitant reduction of NADP to NADPH. The chain is 6-phosphogluconate dehydrogenase, decarboxylating (PGD) from Ovis aries (Sheep).